The sequence spans 342 residues: Protein-glutamate methylesterase/protein-glutamine glutaminase 2 (342 aa).

The Response regulatory domain maps to 2–119 (NIGIVNDLPL…GGSADPSQPL (118 aa)). 4-aspartylphosphate is present on Asp-53. In terms of domain architecture, CheB-type methylesterase spans 144–337 (PAPQGALPPL…DQLISLVQRN (194 aa)). Active-site residues include Ser-159, His-186, and Asp-279.

This sequence belongs to the CheB family. Phosphorylated by CheA. Phosphorylation of the N-terminal regulatory domain activates the methylesterase activity.

Its subcellular location is the cytoplasm. The enzyme catalyses [protein]-L-glutamate 5-O-methyl ester + H2O = L-glutamyl-[protein] + methanol + H(+). It catalyses the reaction L-glutaminyl-[protein] + H2O = L-glutamyl-[protein] + NH4(+). Involved in chemotaxis. Part of a chemotaxis signal transduction system that modulates chemotaxis in response to various stimuli. Catalyzes the demethylation of specific methylglutamate residues introduced into the chemoreceptors (methyl-accepting chemotaxis proteins or MCP) by CheR. Also mediates the irreversible deamidation of specific glutamine residues to glutamic acid. This Burkholderia mallei (strain ATCC 23344) protein is Protein-glutamate methylesterase/protein-glutamine glutaminase 2.